The following is a 436-amino-acid chain: Aminopeptidase C (436 aa).

Active-site residues include C68, H356, and N378.

Belongs to the peptidase C1 family. In terms of assembly, homohexamer.

The enzyme catalyses Inactivates bleomycin B2 (a cytotoxic glycometallopeptide) by hydrolysis of a carboxyamide bond of beta-aminoalanine, but also shows general aminopeptidase activity. The specificity varies somewhat with source, but amino acid arylamides of Met, Leu and Ala are preferred.. Its function is as follows. Hydrolyzes naphthylamide-substituted amino acids as well as di- and tripeptides in which the half-cystine residue is involved in a disulfide loop, notably in oxytocin and vasopressin. Also has a bleomycin hydrolase activity. The chain is Aminopeptidase C (pepC) from Lactococcus lactis subsp. cremoris (Streptococcus cremoris).